The following is a 435-amino-acid chain: MKRRASDRGAGETSTKAKALCTGISGNNAKRAGPFILGPRLGNSPVPSIVQCLARKDGTDDFYQLKILTLEERGDKGIETQEERQGKMLLHTEYSLLSLLHNQEGVVHHHGLFQDRACEIIEDLEANRMVRKMKKRICLVLDCLCAHDFSDKTADLINLQHYVIKEKRLSERETVVIFYDVVRVVEALHKKNIVHRDLKLGNMVLNKRTHRITITNFCLGKHLVSEDDLLKDQRGSPAYISPDVLSGRPYRGKPSDMWALGVVLFTMLYGQFPFYDSIPQELFRKIKAAEYTIPEDGRVSENTVCLIRKLLVLDPQQRLTASEELDSLSSIIASWQSMSLLSGPLQVVPDIDDQVANPEHPQEAKVTEECSQYEFENYMRQQLLLAEEKNTLHEAKSFLQKRQFGNIPPVRRLGHDAQPMNPLDAAILAQRYLRK.

The Protein kinase domain maps to 35 to 332; that stretch reads FILGPRLGNS…EELDSLSSII (298 aa). ATP contacts are provided by residues 41–49 and K66; that span reads LGNSPVPSI. D197 acts as the Proton acceptor in catalysis.

The protein belongs to the protein kinase superfamily. CAMK Ser/Thr protein kinase family.

The protein localises to the nucleus. It localises to the cytoplasm. The enzyme catalyses L-seryl-[protein] + ATP = O-phospho-L-seryl-[protein] + ADP + H(+). It catalyses the reaction L-threonyl-[protein] + ATP = O-phospho-L-threonyl-[protein] + ADP + H(+). May be a negative regulator of NF-kappa-B and p53-mediated gene transcription. This is Serine/threonine-protein kinase 40 (STK40) from Gallus gallus (Chicken).